Consider the following 47-residue polypeptide: Delta-ctenitoxin-Pr2d (47 aa).

Intrachain disulfides connect cysteine 3/cysteine 17, cysteine 10/cysteine 23, cysteine 14/cysteine 46, cysteine 16/cysteine 31, and cysteine 25/cysteine 29.

As to expression, expressed by the venom gland.

Its subcellular location is the secreted. Functionally, blocks voltage-gated sodium channels (Nav). Causes rapid general spastic paralysis and death when injected in mice at dose levels of less than 2 ug per mouse. This is Delta-ctenitoxin-Pr2d from Phoneutria reidyi (Brazilian Amazonian armed spider).